A 129-amino-acid chain; its full sequence is Lysozyme C, milk isozyme (129 aa).

Positions 1 to 129 (KVFSKCELAH…LSEYLASCNL (129 aa)) constitute a C-type lysozyme domain. 4 disulfide bridges follow: Cys6-Cys127, Cys30-Cys115, Cys65-Cys80, and Cys76-Cys94. Residues Glu35 and Asp53 contribute to the active site. The Ca(2+) site is built by Lys82, Asp85, Asn87, Asp90, and Asp91.

It belongs to the glycosyl hydrolase 22 family. Monomer. Requires Ca(2+) as cofactor.

The catalysed reaction is Hydrolysis of (1-&gt;4)-beta-linkages between N-acetylmuramic acid and N-acetyl-D-glucosamine residues in a peptidoglycan and between N-acetyl-D-glucosamine residues in chitodextrins.. Functionally, lysozymes have primarily a bacteriolytic function; those in tissues and body fluids are associated with the monocyte-macrophage system and enhance the activity of immunoagents. The polypeptide is Lysozyme C, milk isozyme (LYZ) (Equus caballus (Horse)).